A 356-amino-acid chain; its full sequence is Carminomycin 4-O-methyltransferase DnrK (356 aa).

Residue R153 coordinates S-adenosyl-L-methionine. Residue D163 coordinates substrate. Residues G187, E210, D237 to F238, and S252 contribute to the S-adenosyl-L-methionine site. Positions 257 and 303 each coordinate substrate.

Belongs to the class I-like SAM-binding methyltransferase superfamily. Cation-independent O-methyltransferase family. As to quaternary structure, homodimer and homotetramer in equilibrium.

It catalyses the reaction carminomycin + S-adenosyl-L-methionine = daunorubicin + S-adenosyl-L-homocysteine + H(+). The protein operates within antibiotic biosynthesis; daunorubicin biosynthesis. Its pathway is antibiotic biosynthesis; carminomycin biosynthesis. Involved in the biosynthesis of the anthracyclines carminomycin and daunorubicin (daunomycin) which are aromatic polyketide antibiotics that exhibit high cytotoxicity and are widely applied in the chemotherapy of a variety of cancers. In vivo, catalyzes the transfer of a methyl group from S-adenosyl-L-methionine to the 4-O-position of carminomycin to form daunorubicin. In vitro, it also methylates the anthracyclines rhodomycin D (10-carbomethoxy-13-deoxycarminomycin) and 13-deoxy-carminomycin at the 4-hydroxyl position. It is quite specific with respect to the length of the carbohydrate chain at the C7 position, but it can accept substrates with bulky substituent at C10 position. This is Carminomycin 4-O-methyltransferase DnrK (dnrK) from Streptomyces peucetius.